A 640-amino-acid chain; its full sequence is Threonine--tRNA ligase (640 aa).

The 61-residue stretch at 1 to 61 folds into the TGS domain; sequence MPAITLPDGS…DADARLRFIT (61 aa). The catalytic stretch occupies residues 243-536; that stretch reads DHRKIGRQMD…LIENCAGRFP (294 aa). Positions 336, 387, and 513 each coordinate Zn(2+).

The protein belongs to the class-II aminoacyl-tRNA synthetase family. In terms of assembly, homodimer. Zn(2+) serves as cofactor.

Its subcellular location is the cytoplasm. The catalysed reaction is tRNA(Thr) + L-threonine + ATP = L-threonyl-tRNA(Thr) + AMP + diphosphate + H(+). In terms of biological role, catalyzes the attachment of threonine to tRNA(Thr) in a two-step reaction: L-threonine is first activated by ATP to form Thr-AMP and then transferred to the acceptor end of tRNA(Thr). Also edits incorrectly charged L-seryl-tRNA(Thr). This is Threonine--tRNA ligase from Acidiphilium cryptum (strain JF-5).